Here is a 283-residue protein sequence, read N- to C-terminus: Elongation factor Ts (283 aa).

The segment at 80 to 83 is involved in Mg(2+) ion dislocation from EF-Tu; that stretch reads TDFV.

This sequence belongs to the EF-Ts family.

Its subcellular location is the cytoplasm. Its function is as follows. Associates with the EF-Tu.GDP complex and induces the exchange of GDP to GTP. It remains bound to the aminoacyl-tRNA.EF-Tu.GTP complex up to the GTP hydrolysis stage on the ribosome. This is Elongation factor Ts from Haemophilus influenzae (strain 86-028NP).